Here is a 253-residue protein sequence, read N- to C-terminus: Small ribosomal subunit protein uS2 (253 aa).

It belongs to the universal ribosomal protein uS2 family.

The sequence is that of Small ribosomal subunit protein uS2 from Chlorobium luteolum (strain DSM 273 / BCRC 81028 / 2530) (Pelodictyon luteolum).